The primary structure comprises 484 residues: Trigger factor (484 aa).

The PPIase FKBP-type domain maps to 162-243 (GDFISIDLSA…VKSVKERELP (82 aa)). The disordered stretch occupies residues 427–484 (DGNTIDTSEFFGKPPENDVTDLLDDDADGDAGVDADGDTENSAEPADADSADTAQGAG). Over residues 444–476 (DVTDLLDDDADGDAGVDADGDTENSAEPADADS) the composition is skewed to acidic residues.

Belongs to the FKBP-type PPIase family. Tig subfamily.

The protein localises to the cytoplasm. The enzyme catalyses [protein]-peptidylproline (omega=180) = [protein]-peptidylproline (omega=0). Functionally, involved in protein export. Acts as a chaperone by maintaining the newly synthesized protein in an open conformation. Functions as a peptidyl-prolyl cis-trans isomerase. The protein is Trigger factor of Mycobacterium ulcerans (strain Agy99).